We begin with the raw amino-acid sequence, 290 residues long: Enoyl-CoA hydratase, mitochondrial (290 aa).

Residues 1-27 (MAALRALLPRVRAPLRPWLFCPVQRSF) constitute a mitochondrion transit peptide. Substrate contacts are provided by residues 98–101 (ADIK) and glycine 141. At lysine 101 the chain carries N6-acetyllysine; alternate. The residue at position 101 (lysine 101) is an N6-succinyllysine; alternate. At lysine 204 the chain carries N6-succinyllysine. Residue lysine 211 is modified to N6-acetyllysine.

The protein belongs to the enoyl-CoA hydratase/isomerase family. In terms of assembly, homohexamer; dimer of trimers.

The protein resides in the mitochondrion matrix. It carries out the reaction a (3S)-3-hydroxyacyl-CoA = a (2E)-enoyl-CoA + H2O. It catalyses the reaction a (3E)-enoyl-CoA = a 4-saturated (2E)-enoyl-CoA. The catalysed reaction is (3E)-hexenoyl-CoA = (2E)-hexenoyl-CoA. The enzyme catalyses (3S)-3-hydroxybutanoyl-CoA = (2E)-butenoyl-CoA + H2O. It carries out the reaction 3-hydroxyisovaleryl-CoA = 3-methylbut-2-enoyl-CoA + H2O. It catalyses the reaction 3-hydroxypropanoyl-CoA = acryloyl-CoA + H2O. The catalysed reaction is 3-hydroxybutanoyl-CoA = (2E)-butenoyl-CoA + H2O. The enzyme catalyses 2-methylpropenoyl-CoA + H2O = (S)-3-hydroxyisobutanoyl-CoA. It carries out the reaction (3S)-hydroxyhexanoyl-CoA = (2E)-hexenoyl-CoA + H2O. It catalyses the reaction (3S)-hydroxydecanoyl-CoA = (2E)-decenoyl-CoA + H2O. It participates in lipid metabolism; fatty acid beta-oxidation. In terms of biological role, converts unsaturated trans-2-enoyl-CoA species ((2E)-enoyl-CoA) to the corresponding 3(S)-3-hydroxyacyl-CoA species through addition of a water molecule to the double bond. Catalyzes the hydration of medium- and short-chained fatty enoyl-CoA thioesters from 4 carbons long (C4) up to C16. Has high substrate specificity for crotonyl-CoA ((2E)-butenoyl-CoA) and moderate specificity for acryloyl-CoA, 3-methylcrotonyl-CoA (3-methyl-(2E)-butenoyl-CoA) and methacrylyl-CoA ((2E)-2-methylpropenoyl-CoA). Can bind tiglyl-CoA (2-methylcrotonoyl-CoA), but hydrates only a small amount of this substrate. Plays a key role in the beta-oxidation spiral of short- and medium-chain fatty acid oxidation. At a lower rate than the hydratase reaction, catalyzes the isomerase reaction of trans-3-enoyl-CoA species (such as (3E)-hexenoyl-CoA) to trans-2-enoyl-CoA species (such as (2E)-hexenoyl-CoA), which are subsequently hydrated to 3(S)-3-hydroxyacyl-CoA species (such as (3S)-hydroxyhexanoyl-CoA). The protein is Enoyl-CoA hydratase, mitochondrial (ECHS1) of Bos taurus (Bovine).